The primary structure comprises 261 residues: Ribonuclease PH (261 aa).

Residues Arg86 and 124–126 (GTR) each bind phosphate.

This sequence belongs to the RNase PH family. As to quaternary structure, homohexameric ring arranged as a trimer of dimers.

It catalyses the reaction tRNA(n+1) + phosphate = tRNA(n) + a ribonucleoside 5'-diphosphate. In terms of biological role, phosphorolytic 3'-5' exoribonuclease that plays an important role in tRNA 3'-end maturation. Removes nucleotide residues following the 3'-CCA terminus of tRNAs; can also add nucleotides to the ends of RNA molecules by using nucleoside diphosphates as substrates, but this may not be physiologically important. Probably plays a role in initiation of 16S rRNA degradation (leading to ribosome degradation) during starvation. The chain is Ribonuclease PH from Persephonella marina (strain DSM 14350 / EX-H1).